The chain runs to 235 residues: Ribose-5-phosphate isomerase A (235 aa).

Substrate is bound by residues 32 to 35, 89 to 92, and 102 to 105; these read TGST, DGAD, and KGGG. Glu-111 serves as the catalytic Proton acceptor. Lys-129 serves as a coordination point for substrate.

The protein belongs to the ribose 5-phosphate isomerase family. In terms of assembly, homodimer.

It carries out the reaction aldehydo-D-ribose 5-phosphate = D-ribulose 5-phosphate. It participates in carbohydrate degradation; pentose phosphate pathway; D-ribose 5-phosphate from D-ribulose 5-phosphate (non-oxidative stage): step 1/1. In terms of biological role, catalyzes the reversible conversion of ribose-5-phosphate to ribulose 5-phosphate. In Synechocystis sp. (strain ATCC 27184 / PCC 6803 / Kazusa), this protein is Ribose-5-phosphate isomerase A.